A 374-amino-acid polypeptide reads, in one-letter code: F-box/LRR-repeat protein 8 (374 aa).

The region spanning 2 to 48 (AEPGEQLPEEVLALIFRHLPLPDRAAAARVCRAWAAAATCSAVWHDT) is the F-box domain.

As to quaternary structure, directly interacts with SKP1 and CUL1.

Functionally, substrate-recognition component of the SCF (SKP1-CUL1-F-box protein)-type E3 ubiquitin ligase complex. This chain is F-box/LRR-repeat protein 8 (FBXL8), found in Bos taurus (Bovine).